A 180-amino-acid chain; its full sequence is MASMMSNAAVVGRTTPAQASMVAPFTGLKSVSAFPVTKKSNDITSIASNGGRVQCMQVWPPLGKKKFETLSYLPPLSEESLMKEVQYLLNNGWVPCLEFEPTHGFVYREHGNTPGYYDGRYWTMWKLPMFGCTDPSQVVAELEEAKKAYPEAFTRIIGFDNVRQVQCISFIAYKPASYDA.

Residues Met1 to Gln54 constitute a chloroplast transit peptide.

The protein belongs to the RuBisCO small chain family. Heterohexadecamer of 8 large and 8 small subunits.

It localises to the plastid. The protein localises to the chloroplast. In terms of biological role, ruBisCO catalyzes two reactions: the carboxylation of D-ribulose 1,5-bisphosphate, the primary event in carbon dioxide fixation, as well as the oxidative fragmentation of the pentose substrate. Both reactions occur simultaneously and in competition at the same active site. Although the small subunit is not catalytic it is essential for maximal activity. This Mesembryanthemum crystallinum (Common ice plant) protein is Ribulose bisphosphate carboxylase small subunit, chloroplastic 2.